The chain runs to 140 residues: MRSKPRIALIAHDRKKDDIVAFAGRHRDFLAQCDLLATGTTGGRIAAETGLPVARMLSGPWGGDLQIGAQLAEGRVTAVVFLRDPMTPQPHEPDINALVRACDVHNVPCATNLATAELVVVELARICFEEDQAAADDAAP.

An MGS-like domain is found at 1 to 140 (MRSKPRIALI…DQAAADDAAP (140 aa)). Substrate contacts are provided by residues His-12, Lys-16, 38 to 41 (TGTT), and 58 to 59 (SG). Catalysis depends on Asp-64, which acts as the Proton donor/acceptor. His-91 is a substrate binding site.

Belongs to the methylglyoxal synthase family.

The enzyme catalyses dihydroxyacetone phosphate = methylglyoxal + phosphate. Catalyzes the formation of methylglyoxal from dihydroxyacetone phosphate. The polypeptide is Methylglyoxal synthase (Cupriavidus metallidurans (strain ATCC 43123 / DSM 2839 / NBRC 102507 / CH34) (Ralstonia metallidurans)).